The primary structure comprises 124 residues: uncharacterized protein (124 aa).

Positions Ser-82–Leu-124 are disordered.

This is an uncharacterized protein from Human cytomegalovirus (strain AD169) (HHV-5).